The sequence spans 154 residues: Protein Smg homolog (154 aa).

The protein belongs to the Smg family.

The sequence is that of Protein Smg homolog from Aromatoleum aromaticum (strain DSM 19018 / LMG 30748 / EbN1) (Azoarcus sp. (strain EbN1)).